Here is a 439-residue protein sequence, read N- to C-terminus: Acyl-lipid (8-3)-desaturase (439 aa).

In terms of domain architecture, Cytochrome b5 heme-binding spans 7–88 (GRSAAREMTA…LPKLDASKVE (82 aa)). Residues histidine 40 and histidine 66 each contribute to the heme site. Residues 123–143 (IPHMIYRVVEIVALFALSFWL) traverse the membrane as a helical segment. The Histidine box-1 motif lies at 171 to 175 (HEMGH). The short motif at 208-213 (HSKHHA) is the Histidine box-2 element. The next 3 membrane-spanning stretches (helical) occupy residues 254 to 274 (AYLF…LYLH), 287 to 307 (FVWI…LGYS), and 312 to 332 (VGMY…QFAV). The short motif at 376–380 (QIEHH) is the Histidine box-3 element.

The protein belongs to the fatty acid desaturase type 1 family. Fe(2+) is required as a cofactor.

It localises to the membrane. It carries out the reaction an (8Z,11Z,14Z)-icosatrienoyl-containing glycerolipid + 2 Fe(II)-[cytochrome b5] + O2 + 2 H(+) = (5Z,8Z,11Z,14Z)-eicosatetraenoyl-containing glycerolipid + 2 Fe(III)-[cytochrome b5] + 2 H2O. The catalysed reaction is an (8Z,11Z,14Z,17Z)-eicosatetraenoyl-containing glycerolipid + 2 Fe(II)-[cytochrome b5] + O2 + 2 H(+) = a (5Z,8Z,11Z,14Z,17Z)-eicosapentaenoyl-containing glycerolipid + 2 Fe(III)-[cytochrome b5] + 2 H2O. Its function is as follows. Fatty acid desaturase that introduces a cis double bond at the 5-position in 20-carbon polyunsaturated fatty acids incorporated in a glycerolipid that contain a Delta(8) double bond. The protein is Acyl-lipid (8-3)-desaturase of Thraustochytrium sp.